The sequence spans 402 residues: Protein RETARDED ROOT GROWTH-LIKE (402 aa).

Residues 375–395 (SATLEWLIIILISMEIAISFY) traverse the membrane as a helical segment.

The protein belongs to the RMD1/sif2 family. Highly expressed in germinating seeds and developing seedlings. Also present at low levels in seedlings, roots, leaves, stems and flowers, and barely in siliques.

The protein resides in the mitochondrion membrane. It localises to the mitochondrion. In terms of biological role, mediates abscisic acid (ABA) signal transduction through mitochondrial retrograde regulation involving ABI4 during seed germination and seedling growth, and leading to the production of reactive oxygen species (ROS) by the alternative respiratory pathway. Required for the maintenance of mitochondrial structure. In Arabidopsis thaliana (Mouse-ear cress), this protein is Protein RETARDED ROOT GROWTH-LIKE.